Consider the following 314-residue polypeptide: Lipoyl synthase (314 aa).

The [4Fe-4S] cluster site is built by Cys-55, Cys-60, Cys-66, Cys-81, Cys-85, Cys-88, and Ser-292. A Radical SAM core domain is found at 67 to 281 (WEDREATFLI…SAYAEGLGFA (215 aa)).

This sequence belongs to the radical SAM superfamily. Lipoyl synthase family. Requires [4Fe-4S] cluster as cofactor.

The protein localises to the cytoplasm. It carries out the reaction [[Fe-S] cluster scaffold protein carrying a second [4Fe-4S](2+) cluster] + N(6)-octanoyl-L-lysyl-[protein] + 2 oxidized [2Fe-2S]-[ferredoxin] + 2 S-adenosyl-L-methionine + 4 H(+) = [[Fe-S] cluster scaffold protein] + N(6)-[(R)-dihydrolipoyl]-L-lysyl-[protein] + 4 Fe(3+) + 2 hydrogen sulfide + 2 5'-deoxyadenosine + 2 L-methionine + 2 reduced [2Fe-2S]-[ferredoxin]. Its pathway is protein modification; protein lipoylation via endogenous pathway; protein N(6)-(lipoyl)lysine from octanoyl-[acyl-carrier-protein]: step 2/2. Its function is as follows. Catalyzes the radical-mediated insertion of two sulfur atoms into the C-6 and C-8 positions of the octanoyl moiety bound to the lipoyl domains of lipoate-dependent enzymes, thereby converting the octanoylated domains into lipoylated derivatives. In Mycolicibacterium smegmatis (strain ATCC 700084 / mc(2)155) (Mycobacterium smegmatis), this protein is Lipoyl synthase.